A 318-amino-acid polypeptide reads, in one-letter code: Beta-ketoacyl-[acyl-carrier-protein] synthase III (318 aa).

Residues C113 and H245 contribute to the active site. The ACP-binding stretch occupies residues 246–250 (QANIR). N275 is an active-site residue.

This sequence belongs to the thiolase-like superfamily. FabH family. In terms of assembly, homodimer.

The protein resides in the cytoplasm. The catalysed reaction is malonyl-[ACP] + acetyl-CoA + H(+) = 3-oxobutanoyl-[ACP] + CO2 + CoA. It participates in lipid metabolism; fatty acid biosynthesis. Catalyzes the condensation reaction of fatty acid synthesis by the addition to an acyl acceptor of two carbons from malonyl-ACP. Catalyzes the first condensation reaction which initiates fatty acid synthesis and may therefore play a role in governing the total rate of fatty acid production. Possesses both acetoacetyl-ACP synthase and acetyl transacylase activities. Its substrate specificity determines the biosynthesis of branched-chain and/or straight-chain of fatty acids. This chain is Beta-ketoacyl-[acyl-carrier-protein] synthase III, found in Wolbachia pipientis subsp. Culex pipiens (strain wPip).